Reading from the N-terminus, the 259-residue chain is Deoxyribose-phosphate aldolase (259 aa).

Catalysis depends on Asp-102, which acts as the Proton donor/acceptor. The active-site Schiff-base intermediate with acetaldehyde is Lys-166. Lys-200 functions as the Proton donor/acceptor in the catalytic mechanism.

This sequence belongs to the DeoC/FbaB aldolase family. DeoC type 2 subfamily.

Its subcellular location is the cytoplasm. It carries out the reaction 2-deoxy-D-ribose 5-phosphate = D-glyceraldehyde 3-phosphate + acetaldehyde. The protein operates within carbohydrate degradation; 2-deoxy-D-ribose 1-phosphate degradation; D-glyceraldehyde 3-phosphate and acetaldehyde from 2-deoxy-alpha-D-ribose 1-phosphate: step 2/2. Its function is as follows. Catalyzes a reversible aldol reaction between acetaldehyde and D-glyceraldehyde 3-phosphate to generate 2-deoxy-D-ribose 5-phosphate. The chain is Deoxyribose-phosphate aldolase from Vibrio cholerae serotype O1 (strain ATCC 39315 / El Tor Inaba N16961).